A 707-amino-acid chain; its full sequence is Elongation factor G (707 aa).

The 287-residue stretch at 8 to 294 (ERYRNFGIIA…GVVDYLPSPL (287 aa)) folds into the tr-type G domain. Residues 17 to 24 (AHIDAGKT), 92 to 96 (DTPGH), and 146 to 149 (NKMD) each bind GTP.

The protein belongs to the TRAFAC class translation factor GTPase superfamily. Classic translation factor GTPase family. EF-G/EF-2 subfamily.

It is found in the cytoplasm. Functionally, catalyzes the GTP-dependent ribosomal translocation step during translation elongation. During this step, the ribosome changes from the pre-translocational (PRE) to the post-translocational (POST) state as the newly formed A-site-bound peptidyl-tRNA and P-site-bound deacylated tRNA move to the P and E sites, respectively. Catalyzes the coordinated movement of the two tRNA molecules, the mRNA and conformational changes in the ribosome. The sequence is that of Elongation factor G from Hyphomonas neptunium (strain ATCC 15444).